The chain runs to 565 residues: CTP synthase (565 aa).

Positions 1-272 are amidoligase domain; the sequence is MARPKNVKHI…DLRVMKKLGL (272 aa). S18 is a CTP binding site. S18 lines the UTP pocket. 19–24 serves as a coordination point for ATP; that stretch reads SLGKGI. Y59 contributes to the L-glutamine binding site. Residue D76 coordinates ATP. Residues D76 and E146 each coordinate Mg(2+). CTP contacts are provided by residues 153-155, 193-198, and K229; these read DIE and KTKPTQ. UTP contacts are provided by residues 193-198 and K229; that span reads KTKPTQ. The 245-residue stretch at 299–543 folds into the Glutamine amidotransferase type-1 domain; it reads TIGVCGKYTE…VAAAKEYEKG (245 aa). G363 contacts L-glutamine. The Nucleophile; for glutamine hydrolysis role is filled by C390. L-glutamine-binding positions include 391-394, E414, and R471; that span reads LGMQ. Active-site residues include H516 and E518.

Belongs to the CTP synthase family. In terms of assembly, homotetramer.

It catalyses the reaction UTP + L-glutamine + ATP + H2O = CTP + L-glutamate + ADP + phosphate + 2 H(+). The enzyme catalyses L-glutamine + H2O = L-glutamate + NH4(+). The catalysed reaction is UTP + NH4(+) + ATP = CTP + ADP + phosphate + 2 H(+). It functions in the pathway pyrimidine metabolism; CTP biosynthesis via de novo pathway; CTP from UDP: step 2/2. Its activity is regulated as follows. Allosterically activated by GTP, when glutamine is the substrate; GTP has no effect on the reaction when ammonia is the substrate. The allosteric effector GTP functions by stabilizing the protein conformation that binds the tetrahedral intermediate(s) formed during glutamine hydrolysis. Inhibited by the product CTP, via allosteric rather than competitive inhibition. Catalyzes the ATP-dependent amination of UTP to CTP with either L-glutamine or ammonia as the source of nitrogen. Regulates intracellular CTP levels through interactions with the four ribonucleotide triphosphates. The sequence is that of CTP synthase from Chlorobium phaeobacteroides (strain DSM 266 / SMG 266 / 2430).